We begin with the raw amino-acid sequence, 153 residues long: Regulatory protein RecX (153 aa).

This sequence belongs to the RecX family.

It localises to the cytoplasm. In terms of biological role, modulates RecA activity. In Vibrio vulnificus (strain CMCP6), this protein is Regulatory protein RecX.